A 249-amino-acid chain; its full sequence is Adenosylcobinamide-GDP ribazoletransferase (249 aa).

6 consecutive transmembrane segments (helical) span residues 36–56 (LVGFLLGSIAAGVCYAMHSIG), 57–77 (LNLAADVLGLVTIITLTGGLH), 106–126 (VGAMGVIALATVLLLKIAFLF), 133–153 (KLTAFIMAPMAGRWAMVLAIT), 188–208 (LWLFGLPGLALLGIVFFITWL), and 226–246 (GALGEMIETWVIFLILLGQQI).

Belongs to the CobS family. It depends on Mg(2+) as a cofactor.

It localises to the cell membrane. The enzyme catalyses alpha-ribazole + adenosylcob(III)inamide-GDP = adenosylcob(III)alamin + GMP + H(+). It catalyses the reaction alpha-ribazole 5'-phosphate + adenosylcob(III)inamide-GDP = adenosylcob(III)alamin 5'-phosphate + GMP + H(+). It participates in cofactor biosynthesis; adenosylcobalamin biosynthesis; adenosylcobalamin from cob(II)yrinate a,c-diamide: step 7/7. In terms of biological role, joins adenosylcobinamide-GDP and alpha-ribazole to generate adenosylcobalamin (Ado-cobalamin). Also synthesizes adenosylcobalamin 5'-phosphate from adenosylcobinamide-GDP and alpha-ribazole 5'-phosphate. The sequence is that of Adenosylcobinamide-GDP ribazoletransferase from Desulforamulus reducens (strain ATCC BAA-1160 / DSM 100696 / MI-1) (Desulfotomaculum reducens).